Here is a 148-residue protein sequence, read N- to C-terminus: Transcriptional regulator MraZ (148 aa).

SpoVT-AbrB domains are found at residues 5–51 (AAAL…PSPA) and 80–123 (ARTE…SEAG).

The protein belongs to the MraZ family. Forms oligomers.

It is found in the cytoplasm. It localises to the nucleoid. The polypeptide is Transcriptional regulator MraZ (Dechloromonas aromatica (strain RCB)).